Reading from the N-terminus, the 208-residue chain is Uridine kinase (208 aa).

11 to 18 (GGTGSGKS) is a binding site for ATP.

It belongs to the uridine kinase family.

The protein resides in the cytoplasm. It carries out the reaction uridine + ATP = UMP + ADP + H(+). The catalysed reaction is cytidine + ATP = CMP + ADP + H(+). It functions in the pathway pyrimidine metabolism; CTP biosynthesis via salvage pathway; CTP from cytidine: step 1/3. The protein operates within pyrimidine metabolism; UMP biosynthesis via salvage pathway; UMP from uridine: step 1/1. This Clostridium novyi (strain NT) protein is Uridine kinase.